The primary structure comprises 312 residues: Malate dehydrogenase (312 aa).

NAD(+) is bound by residues 7-13 (GAAGGIG) and Asp-34. 2 residues coordinate substrate: Arg-81 and Arg-87. NAD(+) is bound by residues Asn-94 and 117–119 (ITN). Residues Asn-119 and Arg-153 each coordinate substrate. The active-site Proton acceptor is the His-177. Met-227 lines the NAD(+) pocket.

The protein belongs to the LDH/MDH superfamily. MDH type 1 family. Homodimer.

The catalysed reaction is (S)-malate + NAD(+) = oxaloacetate + NADH + H(+). Its function is as follows. Catalyzes the reversible oxidation of malate to oxaloacetate. This Serratia proteamaculans (strain 568) protein is Malate dehydrogenase.